A 416-amino-acid chain; its full sequence is Solute carrier family 25 member 46 (416 aa).

Residues 1–13 (MQPRRPDRFDGLE) show a composition bias toward basic and acidic residues. Residues 1–91 (MQPRRPDRFD…GEESSSSSSG (91 aa)) form a disordered region. Residues 37-49 (SFSSSGDLSQHWV) show a composition bias toward polar residues. The span at 82–91 (GEESSSSSSG) shows a compositional bias: low complexity. A Solcar 1 repeat occupies 94 to 185 (HLNRFAGFGI…GMLSEFTHLP (92 aa)). 6 consecutive transmembrane segments (helical) span residues 101–121 (FGIG…CIVL), 161–181 (MGST…LSEF), 197–217 (IGGH…FYSA), 256–276 (LLPL…HYII), 312–332 (FPEL…LYPL), and 381–401 (LGFY…AIVL). A Solcar 2 repeat occupies 309–414 (EDYFPELIAN…KIIYSSVVQT (106 aa)).

It belongs to the mitochondrial carrier (TC 2.A.29) family.

It is found in the mitochondrion outer membrane. Functionally, may play a role in mitochondrial dynamics by controlling mitochondrial membrane fission. This chain is Solute carrier family 25 member 46 (slc25a46), found in Xenopus tropicalis (Western clawed frog).